The chain runs to 102 residues: Large ribosomal subunit protein bL21 (102 aa).

Belongs to the bacterial ribosomal protein bL21 family. In terms of assembly, part of the 50S ribosomal subunit. Contacts protein L20.

In terms of biological role, this protein binds to 23S rRNA in the presence of protein L20. The chain is Large ribosomal subunit protein bL21 from Exiguobacterium sibiricum (strain DSM 17290 / CCUG 55495 / CIP 109462 / JCM 13490 / 255-15).